The sequence spans 279 residues: MAIEAFAPAKINLTLHVTGQRDDGYHLLDSLVVFADIGDTIRVSASDRVSLDIDGPEAGGLAAEPDNLVLRAARLLAPERGAAISLTKRLPVASGIGGGSADAAATLRALAQLWGLAAPSAEQALTLGADVPVCLFPVPARMQGIGDRLGPIPPLPAMDIVLVNPRVAVSTPAVFKSLIVKENAPMNPELPRWRDLPEFTCWLADQRNDLAEPAIAQQPVIADVLNALRDAGALFAGMSGSGATCFGLFPSDGHSAKSVAKAVLRLAHPGWWCAHGRVL.

The active site involves Lys-10. 91 to 101 (PVASGIGGGSA) provides a ligand contact to ATP. Asp-130 is an active-site residue.

The protein belongs to the GHMP kinase family. IspE subfamily.

The catalysed reaction is 4-CDP-2-C-methyl-D-erythritol + ATP = 4-CDP-2-C-methyl-D-erythritol 2-phosphate + ADP + H(+). Its pathway is isoprenoid biosynthesis; isopentenyl diphosphate biosynthesis via DXP pathway; isopentenyl diphosphate from 1-deoxy-D-xylulose 5-phosphate: step 3/6. Catalyzes the phosphorylation of the position 2 hydroxy group of 4-diphosphocytidyl-2C-methyl-D-erythritol. The protein is 4-diphosphocytidyl-2-C-methyl-D-erythritol kinase of Ruegeria pomeroyi (strain ATCC 700808 / DSM 15171 / DSS-3) (Silicibacter pomeroyi).